Reading from the N-terminus, the 341-residue chain is Heme A synthase (341 aa).

A run of 8 helical transmembrane segments spans residues 8-28 (VIIW…VGGI), 92-112 (FHRF…VYFL), 126-146 (IVLL…VRSG), 160-180 (LHLT…LDLI), 201-221 (AALL…AGLI), 256-276 (VQFV…FLFF), 294-314 (LVVF…YSVP), and 315-335 (LALG…MTYT). H260 serves as a coordination point for heme. H321 is a heme binding site.

The protein belongs to the COX15/CtaA family. Type 2 subfamily. As to quaternary structure, interacts with CtaB. The cofactor is heme b.

The protein resides in the cell membrane. The enzyme catalyses Fe(II)-heme o + 2 A + H2O = Fe(II)-heme a + 2 AH2. It participates in porphyrin-containing compound metabolism; heme A biosynthesis; heme A from heme O: step 1/1. In terms of biological role, catalyzes the conversion of heme O to heme A by two successive hydroxylations of the methyl group at C8. The first hydroxylation forms heme I, the second hydroxylation results in an unstable dihydroxymethyl group, which spontaneously dehydrates, resulting in the formyl group of heme A. The sequence is that of Heme A synthase from Flavobacterium johnsoniae (strain ATCC 17061 / DSM 2064 / JCM 8514 / BCRC 14874 / CCUG 350202 / NBRC 14942 / NCIMB 11054 / UW101) (Cytophaga johnsonae).